A 621-amino-acid chain; its full sequence is Chaperone protein DnaK (621 aa).

A Phosphothreonine; by autocatalysis modification is found at Thr-179. Positions 583–605 (SQVQDTQGAAQGQSQGNPQQTAD) are enriched in polar residues. The segment at 583 to 621 (SQVQDTQGAAQGQSQGNPQQTADNRGKVVDAEIVDENKE) is disordered. Residues 606 to 621 (NRGKVVDAEIVDENKE) show a composition bias toward basic and acidic residues.

It belongs to the heat shock protein 70 family.

Its function is as follows. Acts as a chaperone. The polypeptide is Chaperone protein DnaK (Endomicrobium trichonymphae).